Here is a 213-residue protein sequence, read N- to C-terminus: Imidazole glycerol phosphate synthase subunit HisH (213 aa).

The Glutamine amidotransferase type-1 domain occupies 4–213 (SIAIVDYGMG…LYRNFVHWNP (210 aa)). The active-site Nucleophile is the Cys-83. Residues His-193 and Glu-195 contribute to the active site.

In terms of assembly, heterodimer of HisH and HisF.

The protein resides in the cytoplasm. It catalyses the reaction 5-[(5-phospho-1-deoxy-D-ribulos-1-ylimino)methylamino]-1-(5-phospho-beta-D-ribosyl)imidazole-4-carboxamide + L-glutamine = D-erythro-1-(imidazol-4-yl)glycerol 3-phosphate + 5-amino-1-(5-phospho-beta-D-ribosyl)imidazole-4-carboxamide + L-glutamate + H(+). It carries out the reaction L-glutamine + H2O = L-glutamate + NH4(+). It functions in the pathway amino-acid biosynthesis; L-histidine biosynthesis; L-histidine from 5-phospho-alpha-D-ribose 1-diphosphate: step 5/9. Functionally, IGPS catalyzes the conversion of PRFAR and glutamine to IGP, AICAR and glutamate. The HisH subunit catalyzes the hydrolysis of glutamine to glutamate and ammonia as part of the synthesis of IGP and AICAR. The resulting ammonia molecule is channeled to the active site of HisF. The protein is Imidazole glycerol phosphate synthase subunit HisH of Burkholderia pseudomallei (strain K96243).